The chain runs to 351 residues: Thiamine-phosphate synthase (351 aa).

The unknown stretch occupies residues 1–127 (MQNLAPASEG…SETAKALRYR (127 aa)). The segment at 64–84 (RAARQTDQDPGTALSHPQERD) is disordered. The tract at residues 128–351 (VYILEQALTL…LRRLSQGEPS (224 aa)) is thiamine-phosphate synthase. Residues 178–182 (QYRDK) and Asn210 contribute to the 4-amino-2-methyl-5-(diphosphooxymethyl)pyrimidine site. Mg(2+) contacts are provided by Asp211 and Asp230. Ser249 provides a ligand contact to 4-amino-2-methyl-5-(diphosphooxymethyl)pyrimidine. 275–277 (TPT) provides a ligand contact to 2-[(2R,5Z)-2-carboxy-4-methylthiazol-5(2H)-ylidene]ethyl phosphate. Lys278 contributes to the 4-amino-2-methyl-5-(diphosphooxymethyl)pyrimidine binding site. 2-[(2R,5Z)-2-carboxy-4-methylthiazol-5(2H)-ylidene]ethyl phosphate is bound at residue Gly305.

This sequence belongs to the thiamine-phosphate synthase family. The cofactor is Mg(2+).

It carries out the reaction 2-[(2R,5Z)-2-carboxy-4-methylthiazol-5(2H)-ylidene]ethyl phosphate + 4-amino-2-methyl-5-(diphosphooxymethyl)pyrimidine + 2 H(+) = thiamine phosphate + CO2 + diphosphate. The enzyme catalyses 2-(2-carboxy-4-methylthiazol-5-yl)ethyl phosphate + 4-amino-2-methyl-5-(diphosphooxymethyl)pyrimidine + 2 H(+) = thiamine phosphate + CO2 + diphosphate. The catalysed reaction is 4-methyl-5-(2-phosphooxyethyl)-thiazole + 4-amino-2-methyl-5-(diphosphooxymethyl)pyrimidine + H(+) = thiamine phosphate + diphosphate. It participates in cofactor biosynthesis; thiamine diphosphate biosynthesis; thiamine phosphate from 4-amino-2-methyl-5-diphosphomethylpyrimidine and 4-methyl-5-(2-phosphoethyl)-thiazole: step 1/1. Functionally, condenses 4-methyl-5-(beta-hydroxyethyl)thiazole monophosphate (THZ-P) and 2-methyl-4-amino-5-hydroxymethyl pyrimidine pyrophosphate (HMP-PP) to form thiamine monophosphate (TMP). The sequence is that of Thiamine-phosphate synthase from Thermosynechococcus vestitus (strain NIES-2133 / IAM M-273 / BP-1).